Consider the following 505-residue polypeptide: Lysine--tRNA ligase (505 aa).

Residues Glu415 and Glu422 each contribute to the Mg(2+) site.

Belongs to the class-II aminoacyl-tRNA synthetase family. As to quaternary structure, homodimer. Requires Mg(2+) as cofactor.

The protein resides in the cytoplasm. The enzyme catalyses tRNA(Lys) + L-lysine + ATP = L-lysyl-tRNA(Lys) + AMP + diphosphate. This chain is Lysine--tRNA ligase, found in Shigella flexneri.